We begin with the raw amino-acid sequence, 285 residues long: Hydrolase in pqqF 5'region (285 aa).

Positions 22 to 258 constitute a CN hydrolase domain; it reads MRVALYQCPP…EALIIGTLDR (237 aa). The Proton acceptor role is filled by Glu-60. The active-site Proton donor is Lys-131. Cys-165 functions as the Nucleophile in the catalytic mechanism.

The protein belongs to the carbon-nitrogen hydrolase superfamily. NIT1/NIT2 family.

The sequence is that of Hydrolase in pqqF 5'region from Pseudomonas protegens (strain DSM 19095 / LMG 27888 / CFBP 6595 / CHA0).